Consider the following 208-residue polypeptide: Ribosome maturation factor RimP (208 aa).

It belongs to the RimP family.

It localises to the cytoplasm. Its function is as follows. Required for maturation of 30S ribosomal subunits. The chain is Ribosome maturation factor RimP from Bartonella tribocorum (strain CIP 105476 / IBS 506).